A 507-amino-acid polypeptide reads, in one-letter code: Maturase K (507 aa).

This sequence belongs to the intron maturase 2 family. MatK subfamily.

The protein localises to the plastid. The protein resides in the chloroplast. Functionally, usually encoded in the trnK tRNA gene intron. Probably assists in splicing its own and other chloroplast group II introns. In Umbellularia californica (California bay laurel), this protein is Maturase K.